The chain runs to 159 residues: Large ribosomal subunit protein bL17 (159 aa).

Positions 119–138 are enriched in low complexity; that stretch reads PVTPKAKPAKSTAKAAPKSK. The tract at residues 119–159 is disordered; the sequence is PVTPKAKPAKSTAKAAPKSKAPVEETPDEPASEETAEAEAD. The span at 143–159 shows a compositional bias: acidic residues; that stretch reads ETPDEPASEETAEAEAD.

This sequence belongs to the bacterial ribosomal protein bL17 family. In terms of assembly, part of the 50S ribosomal subunit. Contacts protein L32.

The protein is Large ribosomal subunit protein bL17 of Leifsonia xyli subsp. xyli (strain CTCB07).